The primary structure comprises 85 residues: Sec-independent protein translocase protein TatA (85 aa).

The chain crosses the membrane as a helical span at residues 1-21 (MAGLQGWQLVIIILLAILLFA). Residues 43–85 (VKQMRTEGKDAKDERSGTGSTAADEPVEGRVVDRDETDPRDQR) are disordered. Basic and acidic residues-rich tracts occupy residues 44 to 58 (KQMRTEGKDAKDERS) and 69 to 85 (VEGRVVDRDETDPRDQR).

This sequence belongs to the TatA/E family. As to quaternary structure, the Tat system comprises two distinct complexes: a TatABC complex, containing multiple copies of TatA, TatB and TatC subunits, and a separate TatA complex, containing only TatA subunits. Substrates initially bind to the TatABC complex, which probably triggers association of the separate TatA complex to form the active translocon.

It localises to the cell membrane. Its function is as follows. Part of the twin-arginine translocation (Tat) system that transports large folded proteins containing a characteristic twin-arginine motif in their signal peptide across membranes. TatA could form the protein-conducting channel of the Tat system. This is Sec-independent protein translocase protein TatA from Micrococcus luteus (strain ATCC 4698 / DSM 20030 / JCM 1464 / CCM 169 / CCUG 5858 / IAM 1056 / NBRC 3333 / NCIMB 9278 / NCTC 2665 / VKM Ac-2230) (Micrococcus lysodeikticus).